The primary structure comprises 283 residues: Thymidylate synthase (283 aa).

R22 provides a ligand contact to dUMP. C160 serves as the catalytic Nucleophile. Residues 180–183 (RSCD), N191, and 221–223 (HIY) each bind dUMP. Residue D183 coordinates (6R)-5,10-methylene-5,6,7,8-tetrahydrofolate. (6R)-5,10-methylene-5,6,7,8-tetrahydrofolate is bound at residue A282.

It belongs to the thymidylate synthase family. Bacterial-type ThyA subfamily. As to quaternary structure, homodimer.

The protein localises to the cytoplasm. It catalyses the reaction dUMP + (6R)-5,10-methylene-5,6,7,8-tetrahydrofolate = 7,8-dihydrofolate + dTMP. Its pathway is pyrimidine metabolism; dTTP biosynthesis. Catalyzes the reductive methylation of 2'-deoxyuridine-5'-monophosphate (dUMP) to 2'-deoxythymidine-5'-monophosphate (dTMP) while utilizing 5,10-methylenetetrahydrofolate (mTHF) as the methyl donor and reductant in the reaction, yielding dihydrofolate (DHF) as a by-product. This enzymatic reaction provides an intracellular de novo source of dTMP, an essential precursor for DNA biosynthesis. The protein is Thymidylate synthase of Shewanella frigidimarina (strain NCIMB 400).